Reading from the N-terminus, the 240-residue chain is Phosphatidylserine decarboxylase proenzyme (240 aa).

The Schiff-base intermediate with substrate; via pyruvic acid role is filled by Ser205. Ser205 is modified (pyruvic acid (Ser); by autocatalysis).

This sequence belongs to the phosphatidylserine decarboxylase family. PSD-A subfamily. As to quaternary structure, heterodimer of a large membrane-associated beta subunit and a small pyruvoyl-containing alpha subunit. Pyruvate is required as a cofactor. In terms of processing, is synthesized initially as an inactive proenzyme. Formation of the active enzyme involves a self-maturation process in which the active site pyruvoyl group is generated from an internal serine residue via an autocatalytic post-translational modification. Two non-identical subunits are generated from the proenzyme in this reaction, and the pyruvate is formed at the N-terminus of the alpha chain, which is derived from the carboxyl end of the proenzyme. The post-translation cleavage follows an unusual pathway, termed non-hydrolytic serinolysis, in which the side chain hydroxyl group of the serine supplies its oxygen atom to form the C-terminus of the beta chain, while the remainder of the serine residue undergoes an oxidative deamination to produce ammonia and the pyruvoyl prosthetic group on the alpha chain.

It localises to the cell membrane. It catalyses the reaction a 1,2-diacyl-sn-glycero-3-phospho-L-serine + H(+) = a 1,2-diacyl-sn-glycero-3-phosphoethanolamine + CO2. Its pathway is phospholipid metabolism; phosphatidylethanolamine biosynthesis; phosphatidylethanolamine from CDP-diacylglycerol: step 2/2. In terms of biological role, catalyzes the formation of phosphatidylethanolamine (PtdEtn) from phosphatidylserine (PtdSer). The protein is Phosphatidylserine decarboxylase proenzyme of Rhodopirellula baltica (strain DSM 10527 / NCIMB 13988 / SH1).